A 704-amino-acid chain; its full sequence is MARTTPIARYRNIGISAHIDAGKTTTTERILFYTGVNHKIGEVHDGAATMDWMEQEQERGITITSAATTAFWSGMAKQYEPHRINIIDTPGHVDFTIEVERSMRVLDGAVMVYCAVGGVQPQSETVWRQANKYKVPRIAFVNKMDRMGANFLKVVNQIKTRLGANPVPLQLAIGAEEHFTGVVDLVKMKAINWNDADQGVTFEYEDIPADMVELANEWHQNLIESAAEASEELMEKYLGGEELTEAEIKGALRQRVLNNEIILVTCGSAFKNKGVQAMLDAVIDYLPSPVDVPAINGILDDGKDTPAERHASDDEPFSALAFKIATDPFVGNLTFFRVYSGVVNSGDTVLNSVKAARERFGRIVQMHANKREEIKEVRAGDIAAAIGLKDVTTGDTLCDPDAPIILERMEFPEPVISIAVEPKTKADQEKMGLALGRLAKEDPSFRVWTDEESNQTIIAGMGELHLDIIVDRMKREFNVEANVGKPQVAYRETIRQKVTDVEGKHAKQSGGRGQYGHVVIDMYPLEPGSNPKGYEFINDIKGGVIPGEYIPAVDKGIQEQLKAGPLAGYPVVDMGIRLHFGSYHDVDSSELAFKLAASIAFKEGFKKAKPVLLEPIMKVEVETPEENTGDVIGDLSRRRGMLKGQESEVTGVKIHAEVPLSEMFGYATQLRSLTKGRASYTMEFLKYDEAPSNVAQAVIEARGK.

A tr-type G domain is found at 8–290 (ARYRNIGISA…AVIDYLPSPV (283 aa)). GTP is bound by residues 17-24 (AHIDAGKT), 88-92 (DTPGH), and 142-145 (NKMD). N6-acetyllysine occurs at positions 504 and 643.

The protein belongs to the TRAFAC class translation factor GTPase superfamily. Classic translation factor GTPase family. EF-G/EF-2 subfamily.

It localises to the cytoplasm. Catalyzes the GTP-dependent ribosomal translocation step during translation elongation. During this step, the ribosome changes from the pre-translocational (PRE) to the post-translocational (POST) state as the newly formed A-site-bound peptidyl-tRNA and P-site-bound deacylated tRNA move to the P and E sites, respectively. Catalyzes the coordinated movement of the two tRNA molecules, the mRNA and conformational changes in the ribosome. The polypeptide is Elongation factor G (Shigella sonnei (strain Ss046)).